The chain runs to 49 residues: MRQKVTLACVQCASRNYTAAKQIRRLGERLMANKFCSTCNKHTIHRETK.

This sequence belongs to the bacterial ribosomal protein bL33 family.

In Geobacillus kaustophilus (strain HTA426), this protein is Large ribosomal subunit protein bL33A.